Reading from the N-terminus, the 341-residue chain is S-adenosylmethionine:tRNA ribosyltransferase-isomerase (341 aa).

The protein belongs to the QueA family. Monomer.

Its subcellular location is the cytoplasm. It catalyses the reaction 7-aminomethyl-7-carbaguanosine(34) in tRNA + S-adenosyl-L-methionine = epoxyqueuosine(34) in tRNA + adenine + L-methionine + 2 H(+). It functions in the pathway tRNA modification; tRNA-queuosine biosynthesis. Its function is as follows. Transfers and isomerizes the ribose moiety from AdoMet to the 7-aminomethyl group of 7-deazaguanine (preQ1-tRNA) to give epoxyqueuosine (oQ-tRNA). The protein is S-adenosylmethionine:tRNA ribosyltransferase-isomerase of Clostridium botulinum (strain ATCC 19397 / Type A).